An 83-amino-acid chain; its full sequence is Three-finger toxin MALT0058C (83 aa).

The N-terminal stretch at 1 to 21 (MKTLLLTLVVVTIVCLDFGHT) is a signal peptide. 4 disulfide bridges follow: C24–C45, C38–C62, C64–C75, and C76–C81.

It belongs to the three-finger toxin family. Short-chain subfamily. Type I alpha-neurotoxin sub-subfamily. Expressed by the venom gland.

It is found in the secreted. Functionally, binds to muscle nicotinic acetylcholine receptor (nAChR) and inhibits acetylcholine from binding to the receptor, thereby impairing neuromuscular transmission. The sequence is that of Three-finger toxin MALT0058C from Micrurus altirostris (Uruguayan coral snake).